The chain runs to 158 residues: Sec-independent protein translocase protein TatB (158 aa).

Residues 2–22 (FDGIGFMELLLIGVLGLVVLG) form a helical membrane-spanning segment. A disordered region spans residues 86-158 (LKQAAQSVNR…DTSSNPKANG (73 aa)). Composition is skewed to polar residues over residues 88 to 107 (QAAQ…SQGT), 113 to 136 (QIHS…QHLT), and 143 to 158 (EPSQ…KANG).

Belongs to the TatB family. In terms of assembly, the Tat system comprises two distinct complexes: a TatABC complex, containing multiple copies of TatA, TatB and TatC subunits, and a separate TatA complex, containing only TatA subunits. Substrates initially bind to the TatABC complex, which probably triggers association of the separate TatA complex to form the active translocon.

It is found in the cell inner membrane. Functionally, part of the twin-arginine translocation (Tat) system that transports large folded proteins containing a characteristic twin-arginine motif in their signal peptide across membranes. Together with TatC, TatB is part of a receptor directly interacting with Tat signal peptides. TatB may form an oligomeric binding site that transiently accommodates folded Tat precursor proteins before their translocation. The sequence is that of Sec-independent protein translocase protein TatB from Shewanella putrefaciens (strain CN-32 / ATCC BAA-453).